Consider the following 330-residue polypeptide: Beta-ketoacyl-[acyl-carrier-protein] synthase III (330 aa).

Active-site residues include cysteine 115 and histidine 255. An ACP-binding region spans residues 256 to 260; the sequence is QANVR. Asparagine 285 is a catalytic residue.

This sequence belongs to the thiolase-like superfamily. FabH family. In terms of assembly, homodimer.

Its subcellular location is the cytoplasm. The catalysed reaction is malonyl-[ACP] + acetyl-CoA + H(+) = 3-oxobutanoyl-[ACP] + CO2 + CoA. It functions in the pathway lipid metabolism; fatty acid biosynthesis. Catalyzes the condensation reaction of fatty acid synthesis by the addition to an acyl acceptor of two carbons from malonyl-ACP. Catalyzes the first condensation reaction which initiates fatty acid synthesis and may therefore play a role in governing the total rate of fatty acid production. Possesses both acetoacetyl-ACP synthase and acetyl transacylase activities. Its substrate specificity determines the biosynthesis of branched-chain and/or straight-chain of fatty acids. The chain is Beta-ketoacyl-[acyl-carrier-protein] synthase III from Symbiobacterium thermophilum (strain DSM 24528 / JCM 14929 / IAM 14863 / T).